Reading from the N-terminus, the 52-residue chain is Large ribosomal subunit protein eL39 (52 aa).

It belongs to the eukaryotic ribosomal protein eL39 family.

The protein is Large ribosomal subunit protein eL39 of Desulfurococcus amylolyticus (strain DSM 18924 / JCM 16383 / VKM B-2413 / 1221n) (Desulfurococcus kamchatkensis).